We begin with the raw amino-acid sequence, 632 residues long: Golgin subfamily A member 8J (632 aa).

The segment at 1 to 76 (MAEETQHNKL…TSSATLKDLE (76 aa)) is disordered. 2 coiled-coil regions span residues 86 to 154 (LDSR…HMKR) and 220 to 421 (LKVQ…SLMA). Basic and acidic residues-rich tracts occupy residues 352-362 (KQEERIQEQHK) and 427-440 (HGGE…EEAP). Disordered stretches follow at residues 352-377 (KQEE…FKEP), 423-452 (PGEG…DPES), and 496-524 (LSEP…DEGE). Over residues 508–520 (LGGGHHQAGAQGG) the composition is skewed to gly residues.

The protein belongs to the GOLGA8 family.

The sequence is that of Golgin subfamily A member 8J (GOLGA8J) from Homo sapiens (Human).